Here is a 127-residue protein sequence, read N- to C-terminus: Fluoride-specific ion channel FluC (127 aa).

A run of 4 helical transmembrane segments spans residues 7–27, 31–51, 68–88, and 97–117; these read LLVA…GAWV, LGAG…FLIG, LFLA…SYET, and VGKA…LAFL. 2 residues coordinate Na(+): Gly76 and Thr79.

It belongs to the fluoride channel Fluc/FEX (TC 1.A.43) family.

The protein localises to the cell inner membrane. The catalysed reaction is fluoride(in) = fluoride(out). Its activity is regulated as follows. Na(+) is not transported, but it plays an essential structural role and its presence is essential for fluoride channel function. Fluoride-specific ion channel. Important for reducing fluoride concentration in the cell, thus reducing its toxicity. In Thermus thermophilus (strain ATCC BAA-163 / DSM 7039 / HB27), this protein is Fluoride-specific ion channel FluC.